Here is a 370-residue protein sequence, read N- to C-terminus: MAPEEKLPCELIEEILSRVPPESLVRFRTVSKKWNALFDDKMFINNHKMTFRFILATESKFYSVSMTPKIEVRELSLDIPGLELKPKILIDCNGFLLCGMEKEGIVVWNPWLRQAKWIKPKVNQPSLCFNGIGYEYDNMKLESSGYKTLVSYPNELDPTRSVWKIHDFASNSWKYTNLVMSCSSGVTLFGASVSLNGILYWVASHLKNNSLFVLVYYNFSNEKVYKFSDLPCGENHHHDVLVLRIFREDRLSLLKQCHLTKKIEIWVTKNKIRNCSSGDVDSAEWMNFMEVSTLNLPVLVHPSYFIDDKKLVVCSCDQTGQAWIYVVGDNKLISKIQIDSVVGPWPLHCSFFPSLVSIPRSQTKKAALQV.

The F-box domain maps to 1–47 (MAPEEKLPCELIEEILSRVPPESLVRFRTVSKKWNALFDDKMFINNH).

This chain is Putative F-box protein At1g47390, found in Arabidopsis thaliana (Mouse-ear cress).